A 181-amino-acid polypeptide reads, in one-letter code: Shikimate kinase (181 aa).

17–22 (GAGKTT) is an ATP binding site. Thr-21 contributes to the Mg(2+) binding site. Substrate contacts are provided by Asp-39, Arg-63, and Gly-85. An ATP-binding site is contributed by Arg-122. Position 141 (Arg-141) interacts with substrate.

The protein belongs to the shikimate kinase family. As to quaternary structure, monomer. Mg(2+) is required as a cofactor.

Its subcellular location is the cytoplasm. The catalysed reaction is shikimate + ATP = 3-phosphoshikimate + ADP + H(+). The protein operates within metabolic intermediate biosynthesis; chorismate biosynthesis; chorismate from D-erythrose 4-phosphate and phosphoenolpyruvate: step 5/7. In terms of biological role, catalyzes the specific phosphorylation of the 3-hydroxyl group of shikimic acid using ATP as a cosubstrate. In Nostoc sp. (strain PCC 7120 / SAG 25.82 / UTEX 2576), this protein is Shikimate kinase.